Reading from the N-terminus, the 291-residue chain is Small ribosomal subunit biogenesis GTPase RsgA (291 aa).

Residues Asn63 to Leu221 form the CP-type G domain. GTP contacts are provided by residues Thr112 to Asp115 and Gly164 to Thr172. Zn(2+) is bound by residues Cys245, Cys250, His252, and Cys258.

The protein belongs to the TRAFAC class YlqF/YawG GTPase family. RsgA subfamily. In terms of assembly, monomer. Associates with 30S ribosomal subunit, binds 16S rRNA. Requires Zn(2+) as cofactor.

It localises to the cytoplasm. In terms of biological role, one of several proteins that assist in the late maturation steps of the functional core of the 30S ribosomal subunit. Helps release RbfA from mature subunits. May play a role in the assembly of ribosomal proteins into the subunit. Circularly permuted GTPase that catalyzes slow GTP hydrolysis, GTPase activity is stimulated by the 30S ribosomal subunit. This is Small ribosomal subunit biogenesis GTPase RsgA from Staphylococcus epidermidis (strain ATCC 12228 / FDA PCI 1200).